A 206-amino-acid chain; its full sequence is MKQLTPRQAEVLALIRSAVQQTGMPPTRAEIASELGFKSANAAEEHLKALARKGVIRMMPGTSRGIQLLTDEPEEDEGLPLIGRVAAGEPILAQQHIETHYQIDGSLFHPRADFLLRVHGMSMKNIGILDGDLLAVHKTTQANNGQVVVARVGDDEVTVKRFERKGHIVQLLPENEELQPIVVDLTQENLSIEGLAVGVIRNGNWL.

The segment at residues 28 to 48 is a DNA-binding region (H-T-H motif); that stretch reads RAEIASELGFKSANAAEEHLK. Residues Ser-122 and Lys-160 each act as for autocatalytic cleavage activity in the active site.

It belongs to the peptidase S24 family. In terms of assembly, homodimer.

The catalysed reaction is Hydrolysis of Ala-|-Gly bond in repressor LexA.. Functionally, represses a number of genes involved in the response to DNA damage (SOS response), including recA and lexA. In the presence of single-stranded DNA, RecA interacts with LexA causing an autocatalytic cleavage which disrupts the DNA-binding part of LexA, leading to derepression of the SOS regulon and eventually DNA repair. In Tolumonas auensis (strain DSM 9187 / NBRC 110442 / TA 4), this protein is LexA repressor.